The following is a 68-amino-acid chain: Large ribosomal subunit protein uL30 (68 aa).

The protein belongs to the universal ribosomal protein uL30 family. As to quaternary structure, part of the 50S ribosomal subunit.

In Paenarthrobacter aurescens (strain TC1), this protein is Large ribosomal subunit protein uL30.